The following is a 121-amino-acid chain: Two-component response regulator ORR12 (121 aa).

The Response regulatory domain occupies 5 to 121 (HVLVVDDTLV…VDLPRILNYI (117 aa)). 4-aspartylphosphate is present on aspartate 55.

This sequence belongs to the ARR family. Type-A subfamily. Post-translationally, two-component system major event consists of a His-to-Asp phosphorelay between a sensor histidine kinase (HK) and a response regulator (RR). In plants, the His-to-Asp phosphorelay involves an additional intermediate named Histidine-containing phosphotransfer protein (HPt). This multistep phosphorelay consists of a His-Asp-His-Asp sequential transfer of a phosphate group between first a His and an Asp of the HK protein, followed by the transfer to a conserved His of the HPt protein and finally the transfer to an Asp in the receiver domain of the RR protein. As to expression, expressed in flowers and panicles.

Its function is as follows. Functions as a response regulator involved in His-to-Asp phosphorelay signal transduction system. Phosphorylation of the Asp residue in the receiver domain activates the ability of the protein to promote the transcription of target genes. Type-A response regulators seem to act as negative regulators of the cytokinin signaling. This Oryza sativa subsp. japonica (Rice) protein is Two-component response regulator ORR12.